The chain runs to 832 residues: Cadherin-like protein 26 (832 aa).

Positions 1–27 (MAMRSGRHPSLLLLLVLLLWLLQVSII) are cleaved as a signal peptide. Residues 28–614 (DSVQQETDDL…ELADAEVGLH (587 aa)) are Extracellular-facing. 4 consecutive Cadherin domains span residues 35-165 (DDLT…APQF), 166-275 (PEKE…RPAF), 276-396 (TQEN…PPAF), and 397-500 (HPQS…VPTL). Residues N81, N85, N171, and N177 are each glycosylated (N-linked (GlcNAc...) asparagine). N462 carries N-linked (GlcNAc...) asparagine glycosylation. A helical membrane pass occupies residues 615–635 (VGALFPVCAAFVALAVALLFL). At 636-832 (LRCYFVLEPK…EIYSESGVPS (197 aa)) the chain is on the cytoplasmic side. Positions 813–832 (SLGSKATPFEEIYSESGVPS) are disordered.

In terms of assembly, homodimer. Component of a cadherin:catenin adhesion complex composed of at least of CDH26, beta-catenin/CTNNB1, alpha-catenin/CTNNA1 and p120 catenin/CTNND1. In terms of processing, N-glycosylated. As to expression, expressed by epithelial cells of gastrointestinal tissue.

The protein localises to the cell membrane. Functionally, cadherins are calcium-dependent cell adhesion proteins. They preferentially interact with themselves in a homophilic manner in connecting cells; cadherins may thus contribute to the sorting of heterogeneous cell types. Ligand for integrins alpha-E/beta-7, ITGAE:ITGAB7, alpha-4/beta-7, ITGA4:ITGAB7 and alpha-4/beta-1, ITGA4:ITGAB1 through which modulates CD4(+) T cells activation. The protein is Cadherin-like protein 26 (CDH26) of Homo sapiens (Human).